The following is a 368-amino-acid chain: G-protein coupled receptor 62 (368 aa).

The Extracellular segment spans residues 1–18; that stretch reads MANSTGLNASEVAGSLGL. Residues asparagine 3 and asparagine 8 are each glycosylated (N-linked (GlcNAc...) asparagine). Residues 19 to 39 form a helical membrane-spanning segment; it reads ILAAVVEVGALLGNGALLVVV. Over 40–53 the chain is Cytoplasmic; sequence LRTPGLRDALYLAH. The chain crosses the membrane as a helical span at residues 54 to 74; sequence LCVVDLLAAASIMPLGLLAAP. Topologically, residues 75-91 are extracellular; the sequence is PPGLGRVRLGPAPCRAA. A helical membrane pass occupies residues 92 to 112; that stretch reads RFLSAALLPACTLGVAALGLA. The Cytoplasmic portion of the chain corresponds to 113–129; the sequence is RYRLIVHPLRPGSRPPP. Residues 130-150 form a helical membrane-spanning segment; that stretch reads VLVLTAVWAAAGLLGALSLLG. The Extracellular segment spans residues 151–177; it reads TPPAPPPAPARCSVLAGGLGPFRPLWA. The helical transmembrane segment at 178–198 threads the bilayer; sequence LLAFALPALLLLGAYGGIFVV. Topologically, residues 199 to 239 are cytoplasmic; that stretch reads ARRAALRPPRPARGSRLHSDSLDSRLSILPPLRPRLPGGKA. The chain crosses the membrane as a helical span at residues 240–260; that stretch reads ALAPALAVGQFAACWLPYGCA. Residues 261–272 are Extracellular-facing; it reads CLAPAARAAEAE. The helical transmembrane segment at 273–293 threads the bilayer; that stretch reads AAVTWVAYSAFAAHPFLYGLL. Residues 294–368 are Cytoplasmic-facing; it reads QRPVRLALGR…YQGPPESSLS (75 aa). The disordered stretch occupies residues 332-368; the sequence is RPPEGPAVGPSEAPEQTPELAGGRSPAYQGPPESSLS.

Belongs to the G-protein coupled receptor 1 family. In terms of assembly, homodimers. Forms heterodimer with MTNR1B. Interacts with ARRB1 and ARRB2 in a spontaneous and agonist-independent manner; leading to the internalization of GPR62 in the endosomal compartment. As to expression, expressed in brain; detected in the basal forebrain, frontal cortex, caudate, putamen, thalamus and hippocampus.

The protein resides in the cell membrane. Its subcellular location is the endosome membrane. In terms of biological role, orphan G-protein coupled receptor. Constitutively activates the G(q/11)/inositol phosphate and the G(s)-alpha/cAMP signaling pathways. Has spontaneous activity for beta-arrestin recruitment. Shows a reciprocal modulation of signaling functions with the melatonin receptor MTNR1B most likely through receptor heteromerization. The protein is G-protein coupled receptor 62 (GPR62) of Homo sapiens (Human).